The chain runs to 383 residues: Lipid-A-disaccharide synthase (383 aa).

It belongs to the LpxB family.

It carries out the reaction 2-N,3-O-bis[(3R)-3-hydroxytetradecanoyl]-alpha-D-glucosaminyl 1-phosphate + UDP-2-N,3-O-bis[(3R)-3-hydroxytetradecanoyl]-alpha-D-glucosamine = lipid A disaccharide (E. coli) + UDP + H(+). The enzyme catalyses a lipid X + a UDP-2-N,3-O-bis[(3R)-3-hydroxyacyl]-alpha-D-glucosamine = a lipid A disaccharide + UDP + H(+). It functions in the pathway glycolipid biosynthesis; lipid IV(A) biosynthesis; lipid IV(A) from (3R)-3-hydroxytetradecanoyl-[acyl-carrier-protein] and UDP-N-acetyl-alpha-D-glucosamine: step 5/6. In terms of biological role, condensation of UDP-2,3-diacylglucosamine and 2,3-diacylglucosamine-1-phosphate to form lipid A disaccharide, a precursor of lipid A, a phosphorylated glycolipid that anchors the lipopolysaccharide to the outer membrane of the cell. This chain is Lipid-A-disaccharide synthase, found in Klebsiella pneumoniae subsp. pneumoniae (strain ATCC 700721 / MGH 78578).